We begin with the raw amino-acid sequence, 152 residues long: MSKATGFIKEFRDFAVKGNAIDLAVGVIIGAAFGKIVDSLVKDVVMPLVNFILGGSVDFSNKFLVLSMPDGYTGPMTYADLTKAGANVLAWGNFITIIINFVLLAFVIFWMVKAIYFARRKEEAAPEAPAAPPEDVTVLREIRDLLKDKQGS.

3 helical membrane passes run 21–41 (IDLA…DSLV), 44–64 (VVMP…NKFL), and 92–112 (GNFI…FWMV).

The protein belongs to the MscL family. Homopentamer.

The protein resides in the cell inner membrane. In terms of biological role, channel that opens in response to stretch forces in the membrane lipid bilayer. May participate in the regulation of osmotic pressure changes within the cell. This Bordetella pertussis (strain Tohama I / ATCC BAA-589 / NCTC 13251) protein is Large-conductance mechanosensitive channel.